A 218-amino-acid polypeptide reads, in one-letter code: Phosphoenolpyruvate guanylyltransferase (218 aa).

Phosphoenolpyruvate-binding residues include Thr-151, Gly-166, and Ser-169.

Belongs to the CofC family.

It carries out the reaction phosphoenolpyruvate + GTP + H(+) = enolpyruvoyl-2-diphospho-5'-guanosine + diphosphate. It functions in the pathway cofactor biosynthesis; coenzyme F420 biosynthesis. Guanylyltransferase that catalyzes the activation of phosphoenolpyruvate (PEP) as enolpyruvoyl-2-diphospho-5'-guanosine, via the condensation of PEP with GTP. It is involved in the biosynthesis of coenzyme F420, a hydride carrier cofactor. The sequence is that of Phosphoenolpyruvate guanylyltransferase from Mycobacterium sp. (strain KMS).